We begin with the raw amino-acid sequence, 319 residues long: MFDDLSNYRPANPALWQGRMDTANQERFFQKITFIDNQNELMTKDKKTIFLGFASDAGIKRNLGRTGAKLGPDQIKTQLAKLPCHNNKHYVDLGNVVCENDELELSQSQFAQIVHFCHENGHQICAFGGGHEIAWAHYQGLSSLYPKLGVINFDAHFDLRPYKKGEFGNSGTPFSQIATYCEEKKMPFHYCCIGVQKFGNTPSLFEKAKELNVSYLSAEDLYEQSQAWQIAFLDDFILNLDHIYLTICLDVLAECYAPGVSAPQALGLSPWQIMPLLKYLIQSGKVVSLDIAELSPPLDSELKTARLAALIIAELLDTN.

6 residues coordinate Mn(2+): H131, D154, H156, D158, C248, and D250.

The protein belongs to the arginase family. Mn(2+) is required as a cofactor.

It catalyses the reaction N-formimidoyl-L-glutamate + H2O = formamide + L-glutamate. It functions in the pathway amino-acid degradation; L-histidine degradation into L-glutamate; L-glutamate from N-formimidoyl-L-glutamate (hydrolase route): step 1/1. In terms of biological role, catalyzes the conversion of N-formimidoyl-L-glutamate to L-glutamate and formamide. In Legionella pneumophila (strain Paris), this protein is Formimidoylglutamase.